Consider the following 160-residue polypeptide: 2-C-methyl-D-erythritol 2,4-cyclodiphosphate synthase (160 aa).

Residues Asp-12 and His-14 each coordinate a divalent metal cation. 4-CDP-2-C-methyl-D-erythritol 2-phosphate-binding positions include 12–14 and 38–39; these read DVH and HS. An a divalent metal cation-binding site is contributed by His-46. 4-CDP-2-C-methyl-D-erythritol 2-phosphate contacts are provided by residues 60–62, 65–69, 136–139, Phe-143, and Arg-146; these read DIG, FPDTD, and TTTE.

The protein belongs to the IspF family. In terms of assembly, homotrimer. A divalent metal cation serves as cofactor.

The catalysed reaction is 4-CDP-2-C-methyl-D-erythritol 2-phosphate = 2-C-methyl-D-erythritol 2,4-cyclic diphosphate + CMP. It functions in the pathway isoprenoid biosynthesis; isopentenyl diphosphate biosynthesis via DXP pathway; isopentenyl diphosphate from 1-deoxy-D-xylulose 5-phosphate: step 4/6. In terms of biological role, involved in the biosynthesis of isopentenyl diphosphate (IPP) and dimethylallyl diphosphate (DMAPP), two major building blocks of isoprenoid compounds. Catalyzes the conversion of 4-diphosphocytidyl-2-C-methyl-D-erythritol 2-phosphate (CDP-ME2P) to 2-C-methyl-D-erythritol 2,4-cyclodiphosphate (ME-CPP) with a corresponding release of cytidine 5-monophosphate (CMP). In Acinetobacter baumannii (strain SDF), this protein is 2-C-methyl-D-erythritol 2,4-cyclodiphosphate synthase.